The following is a 272-amino-acid chain: 3-keto-5-aminohexanoate cleavage enzyme (272 aa).

Glutamate 15 is a (5S)-5-amino-3-oxohexanoate binding site. Zn(2+) contacts are provided by histidine 47 and histidine 49. Serine 83, glycine 86, and threonine 107 together coordinate (5S)-5-amino-3-oxohexanoate. Glutamate 226 contacts Zn(2+).

This sequence belongs to the BKACE family. Kce subfamily. Homotetramer. Zn(2+) is required as a cofactor.

The catalysed reaction is (5S)-5-amino-3-oxohexanoate + acetyl-CoA = (3S)-3-aminobutanoyl-CoA + acetoacetate. It functions in the pathway amino-acid degradation; L-lysine degradation via acetate pathway. Its activity is regulated as follows. 3-fold increase in activity by addition of 10 mM 2-mercaptoethanol. Addition of CoCl(2) and to a lesser extent MnCl(2) increases the activity but not MgCl(2). Inhibited by phosphate buffer but not by 5,5'-dithio-2-nitrobenzoic acid. Functionally, involved in the anaerobic fermentation of lysine. Catalyzes the reversible reaction between 3-keto-5-aminohexanoate (KAH) and acetyl-CoA to form 3-aminobutyryl-CoA and acetoacetate. The reaction involves the deprotonation of KAH, the nucleophilic addition onto acetyl-CoA and the intramolecular transfer of the CoA moiety. It can also use beta-alanyl-CoA as substrate. The chain is 3-keto-5-aminohexanoate cleavage enzyme from Fusobacterium nucleatum subsp. nucleatum (strain ATCC 25586 / DSM 15643 / BCRC 10681 / CIP 101130 / JCM 8532 / KCTC 2640 / LMG 13131 / VPI 4355).